The sequence spans 402 residues: Multidrug resistance protein MdtH (402 aa).

The next 11 helical transmembrane spans lie at 13–33, 45–65, 99–116, 139–159, 165–185, 214–234, 244–264, 277–297, 300–322, 340–360, and 368–388; these read YFLL…FPLI, ALMV…LGIF, PWLL…GTLF, LLMM…SWLL, LVCA…AWLL, VLTL…LPIM, AVKW…YPIA, LMAG…VGNL, LFTL…ETLS, LGLA…FDMG, and LPWM…GWQF.

Belongs to the major facilitator superfamily. DHA1 family. MdtH (TC 2.A.1.2.21) subfamily.

The protein localises to the cell inner membrane. This chain is Multidrug resistance protein MdtH, found in Citrobacter koseri (strain ATCC BAA-895 / CDC 4225-83 / SGSC4696).